A 71-amino-acid polypeptide reads, in one-letter code: Prokaryotic ubiquitin-like protein Pup (71 aa).

Low complexity predominate over residues 1 to 18 (MATRDSGGQSQTGRSQQG). The segment at 1 to 42 (MATRDSGGQSQTGRSQQGEEIEDVTTEASAEAAERHAEITED) is disordered. Positions 27 to 65 (EASAEAAERHAEITEDVDDLLDEIDSVLEENAEEFVRGY) are ARC ATPase binding. Positions 29 to 60 (SAEAAERHAEITEDVDDLLDEIDSVLEENAEE) form a coiled coil. Glu-71 participates in a covalent cross-link: Isoglutamyl lysine isopeptide (Glu-Lys) (interchain with K-? in acceptor proteins).

Belongs to the prokaryotic ubiquitin-like protein family. Strongly interacts with the proteasome-associated ATPase ARC through a hydrophobic interface; the interacting region of Pup lies in its C-terminal half. There is one Pup binding site per ARC hexamer ring.

The protein operates within protein degradation; proteasomal Pup-dependent pathway. Functionally, protein modifier that is covalently attached to lysine residues of substrate proteins, thereby targeting them for proteasomal degradation. The tagging system is termed pupylation. The protein is Prokaryotic ubiquitin-like protein Pup of Salinispora tropica (strain ATCC BAA-916 / DSM 44818 / JCM 13857 / NBRC 105044 / CNB-440).